A 162-amino-acid polypeptide reads, in one-letter code: Sec-independent protein translocase protein TatB (162 aa).

The helical transmembrane segment at 1 to 21 threads the bilayer; the sequence is MFDLGWTELLVIGVVALIVVG. Disordered regions lie at residues 69–111 and 124–162; these read ATNP…DRAE and AADR…ETKA. 2 stretches are compositionally biased toward basic and acidic residues: residues 83–111 and 124–141; these read ATRD…DRAE and AADR…KAEE. A compositionally biased stretch (low complexity) spans 144 to 155; it reads AALSATPASTAS.

The protein belongs to the TatB family. As to quaternary structure, the Tat system comprises two distinct complexes: a TatABC complex, containing multiple copies of TatA, TatB and TatC subunits, and a separate TatA complex, containing only TatA subunits. Substrates initially bind to the TatABC complex, which probably triggers association of the separate TatA complex to form the active translocon.

It localises to the cell inner membrane. In terms of biological role, part of the twin-arginine translocation (Tat) system that transports large folded proteins containing a characteristic twin-arginine motif in their signal peptide across membranes. Together with TatC, TatB is part of a receptor directly interacting with Tat signal peptides. TatB may form an oligomeric binding site that transiently accommodates folded Tat precursor proteins before their translocation. The polypeptide is Sec-independent protein translocase protein TatB (Ruegeria sp. (strain TM1040) (Silicibacter sp.)).